A 695-amino-acid polypeptide reads, in one-letter code: Elongation factor G 1 (695 aa).

The 276-residue stretch at 6-281 (TRYRNIGIFA…AVVDYLPNPK (276 aa)) folds into the tr-type G domain. Residues 15–22 (AHVDAGKT), 79–83 (DTPGH), and 133–136 (NKLD) contribute to the GTP site.

The protein belongs to the TRAFAC class translation factor GTPase superfamily. Classic translation factor GTPase family. EF-G/EF-2 subfamily.

It is found in the cytoplasm. Functionally, catalyzes the GTP-dependent ribosomal translocation step during translation elongation. During this step, the ribosome changes from the pre-translocational (PRE) to the post-translocational (POST) state as the newly formed A-site-bound peptidyl-tRNA and P-site-bound deacylated tRNA move to the P and E sites, respectively. Catalyzes the coordinated movement of the two tRNA molecules, the mRNA and conformational changes in the ribosome. The chain is Elongation factor G 1 (fusA) from Synechocystis sp. (strain ATCC 27184 / PCC 6803 / Kazusa).